A 176-amino-acid chain; its full sequence is NAD(P)H-quinone oxidoreductase subunit 6, chloroplastic (176 aa).

Helical transmembrane passes span 10–30 (FLLVFLGSGLLVGGLGVVLLP), 32–52 (PIFSAFSLGFVLVCISLLYIL), 61–81 (AQLLIYVGAINVLIIFAVMFM), 92–112 (LWTVGNGITSLVCTTILFLLM), and 152–172 (FFLPFELISIILLVALIGAIS).

This sequence belongs to the complex I subunit 6 family. In terms of assembly, NDH is composed of at least 16 different subunits, 5 of which are encoded in the nucleus.

It localises to the plastid. The protein localises to the chloroplast thylakoid membrane. It carries out the reaction a plastoquinone + NADH + (n+1) H(+)(in) = a plastoquinol + NAD(+) + n H(+)(out). The enzyme catalyses a plastoquinone + NADPH + (n+1) H(+)(in) = a plastoquinol + NADP(+) + n H(+)(out). Functionally, NDH shuttles electrons from NAD(P)H:plastoquinone, via FMN and iron-sulfur (Fe-S) centers, to quinones in the photosynthetic chain and possibly in a chloroplast respiratory chain. The immediate electron acceptor for the enzyme in this species is believed to be plastoquinone. Couples the redox reaction to proton translocation, and thus conserves the redox energy in a proton gradient. This is NAD(P)H-quinone oxidoreductase subunit 6, chloroplastic (ndhG) from Olimarabidopsis pumila (Dwarf rocket).